Reading from the N-terminus, the 509-residue chain is ATP synthase subunit alpha, mitochondrial (509 aa).

171 to 178 (GDRQTGKT) is an ATP binding site.

Belongs to the ATPase alpha/beta chains family. F-type ATPases have 2 components, CF(1) - the catalytic core - and CF(0) - the membrane proton channel. CF(1) has five subunits: alpha(3), beta(3), gamma(1), delta(1), epsilon(1). CF(0) has three main subunits: a, b and c.

It localises to the mitochondrion. The protein localises to the mitochondrion inner membrane. Its function is as follows. Mitochondrial membrane ATP synthase (F(1)F(0) ATP synthase or Complex V) produces ATP from ADP in the presence of a proton gradient across the membrane which is generated by electron transport complexes of the respiratory chain. F-type ATPases consist of two structural domains, F(1) - containing the extramembraneous catalytic core, and F(0) - containing the membrane proton channel, linked together by a central stalk and a peripheral stalk. During catalysis, ATP synthesis in the catalytic domain of F(1) is coupled via a rotary mechanism of the central stalk subunits to proton translocation. Subunits alpha and beta form the catalytic core in F(1). Rotation of the central stalk against the surrounding alpha(3)beta(3) subunits leads to hydrolysis of ATP in three separate catalytic sites on the beta subunits. Subunit alpha does not bear the catalytic high-affinity ATP-binding sites. The chain is ATP synthase subunit alpha, mitochondrial (ATPA) from Nicotiana plumbaginifolia (Leadwort-leaved tobacco).